Consider the following 481-residue polypeptide: ATP synthase subunit beta (481 aa).

Residue 160-167 (GGAGVGKT) participates in ATP binding.

Belongs to the ATPase alpha/beta chains family. As to quaternary structure, F-type ATPases have 2 components, CF(1) - the catalytic core - and CF(0) - the membrane proton channel. CF(1) has five subunits: alpha(3), beta(3), gamma(1), delta(1), epsilon(1). CF(0) has three main subunits: a(1), b(2) and c(9-12). The alpha and beta chains form an alternating ring which encloses part of the gamma chain. CF(1) is attached to CF(0) by a central stalk formed by the gamma and epsilon chains, while a peripheral stalk is formed by the delta and b chains.

The protein localises to the cell inner membrane. The enzyme catalyses ATP + H2O + 4 H(+)(in) = ADP + phosphate + 5 H(+)(out). In terms of biological role, produces ATP from ADP in the presence of a proton gradient across the membrane. The catalytic sites are hosted primarily by the beta subunits. The chain is ATP synthase subunit beta from Stigmatella aurantiaca.